The primary structure comprises 215 residues: MNISIFDLSIYIKFFIGLCALVNPIGMIPIFTTMTNNQSFLERKKTNIVANFSVSLILLISLFFGSNILNIFGISINSFRIAGGILIISIAFSMISGQFIKTIKTKKETKEENKIDNISVVPLAMPLIAGPGAISSTIVWSTYYSSWANLFLCSLVIFLFSFVCWLCFEAAPYVVQILGNTGINIITRIMGLLLMSLGIEFISTGIGAIFPGLLH.

Transmembrane regions (helical) follow at residues 14–34 (FFIGLCALVNPIGMIPIFTTM), 56–76 (LILLISLFFGSNILNIFGISI), 81–101 (IAGGILIISIAFSMISGQFIK), 120–140 (VVPLAMPLIAGPGAISSTIVW), 150–170 (LFLCSLVIFLFSFVCWLCFEA), and 189–209 (IMGLLLMSLGIEFISTGIGAI).

The protein belongs to the UPF0056 (MarC) family.

It is found in the cell membrane. This Buchnera aphidicola subsp. Acyrthosiphon pisum (strain APS) (Acyrthosiphon pisum symbiotic bacterium) protein is UPF0056 membrane protein BU267.